The following is a 194-amino-acid chain: Probable calcium-binding protein CML45 (194 aa).

Residues 52 to 63 (NNKDQQETLTKQ) show a composition bias toward basic and acidic residues. The interval 52-81 (NNKDQQETLTKQEDDDDDDDDDDDDDDDDI) is disordered. Positions 64-81 (EDDDDDDDDDDDDDDDDI) are enriched in acidic residues. EF-hand domains lie at 76 to 98 (DDDD…LGLF), 122 to 157 (ASLE…LGFK), and 160 to 194 (SYLD…TSFY). D135, N137, D139, E146, D173, N175, D177, K179, and E184 together coordinate Ca(2+).

Potential calcium sensor. This Arabidopsis thaliana (Mouse-ear cress) protein is Probable calcium-binding protein CML45.